The sequence spans 1070 residues: DNA-directed RNA polymerase subunit beta (1070 aa).

The protein belongs to the RNA polymerase beta chain family. In terms of assembly, in plastids the minimal PEP RNA polymerase catalytic core is composed of four subunits: alpha, beta, beta', and beta''. When a (nuclear-encoded) sigma factor is associated with the core the holoenzyme is formed, which can initiate transcription.

It is found in the plastid. The protein resides in the chloroplast. The enzyme catalyses RNA(n) + a ribonucleoside 5'-triphosphate = RNA(n+1) + diphosphate. Functionally, DNA-dependent RNA polymerase catalyzes the transcription of DNA into RNA using the four ribonucleoside triphosphates as substrates. The chain is DNA-directed RNA polymerase subunit beta from Illicium oligandrum (Star anise).